Consider the following 457-residue polypeptide: Argininosuccinate lyase (457 aa).

It belongs to the lyase 1 family. Argininosuccinate lyase subfamily.

The protein localises to the cytoplasm. The enzyme catalyses 2-(N(omega)-L-arginino)succinate = fumarate + L-arginine. Its pathway is amino-acid biosynthesis; L-arginine biosynthesis; L-arginine from L-ornithine and carbamoyl phosphate: step 3/3. The chain is Argininosuccinate lyase from Escherichia coli O157:H7.